A 205-amino-acid polypeptide reads, in one-letter code: Non-specific lipid transfer protein GPI-anchored 13 (205 aa).

An N-terminal signal peptide occupies residues 1–24 (MESRKIKVMATAIALIMVAMVVDA). Disulfide bonds link Cys-36/Cys-77, Cys-46/Cys-61, Cys-62/Cys-104, and Cys-75/Cys-113. N-linked (GlcNAc...) asparagine glycosylation is found at Asn-93, Asn-137, and Asn-165. Residues 141–176 (SASAPTGSASEPTSMSSTPGSSAGNNSGRTTSVPGT) form a disordered region. A lipid anchor (GPI-anchor amidated asparagine) is attached at Asn-177. Residues 178–205 (HAQSFSKQWLGLEVVAHFFVIFYIFILV) constitute a propeptide, removed in mature form.

Belongs to the plant LTP family. Expressed preferentially in expanding leaves and sepals, restricted to the distal side. Expressed at low levels in roots and stems.

It localises to the cell membrane. In terms of biological role, probable lipid transfer protein. This is Non-specific lipid transfer protein GPI-anchored 13 from Arabidopsis thaliana (Mouse-ear cress).